The primary structure comprises 471 residues: L-amino acid dehydrogenase (471 aa).

A Mg(2+)-binding site is contributed by Gly-31. Ser-33 serves as a coordination point for FAD. Gly-34 contributes to the Mg(2+) binding site. Glu-52, Arg-60, and Val-256 together coordinate FAD. Ala-283 contacts Mg(2+). Phe-453 contacts FAD.

The protein belongs to the flavin monoamine oxidase family. FAD serves as cofactor. Mg(2+) is required as a cofactor.

It localises to the cellular thylakoid membrane. It catalyses the reaction a plastoquinone + an L-alpha-amino acid + H2O = a plastoquinol + a 2-oxocarboxylate + NH4(+). The enzyme catalyses a plastoquinone + L-arginine + H2O = a plastoquinol + 5-guanidino-2-oxopentanoate + NH4(+). The protein operates within amino-acid degradation; L-arginine degradation. Its activity is regulated as follows. Inhibited by Ca(2+) and other cations such as Ni(2+), Co(2+) and Zn(2+). The inhibition by o-phenanthroline and salicylhydroxamic acid suggests the presence of a metal cofactor besides FAD in the enzyme. The L-arginine-stimulated O(2) consumption involving slr0782 is inhibited by inhibitors of the respiratory electron transport chain, such as KCN and 2,5-dibromo-3-methyl-6-isopropyl-p-benzoquinone, which indicates a participation of the cytochrome b6/f complex and of a cytochrome oxidase. L-amino acid dehydrogenase with broad substrate specificity. Catalyzes the oxidative deamination of various L-amino acids, L-Arg and L-Cys being the best substrates in vitro. Likely functions mainly as an L-arginine dehydrogenase in vivo. Probably feeds electrons from L-arginine oxidation and also from the oxidation of other L-amino acids into the respiratory electron transport chain associated to the thylakoid membrane, and does not directly interact with molecular oxygen but donates electrons to the plastoquinone pool. Cannot use D-amino acids as substrates. This chain is L-amino acid dehydrogenase, found in Synechocystis sp. (strain ATCC 27184 / PCC 6803 / Kazusa).